An 89-amino-acid chain; its full sequence is Small ribosomal subunit protein uS15 (89 aa).

The protein belongs to the universal ribosomal protein uS15 family. As to quaternary structure, part of the 30S ribosomal subunit. Forms a bridge to the 50S subunit in the 70S ribosome, contacting the 23S rRNA.

Its function is as follows. One of the primary rRNA binding proteins, it binds directly to 16S rRNA where it helps nucleate assembly of the platform of the 30S subunit by binding and bridging several RNA helices of the 16S rRNA. Forms an intersubunit bridge (bridge B4) with the 23S rRNA of the 50S subunit in the ribosome. This Heliobacterium modesticaldum (strain ATCC 51547 / Ice1) protein is Small ribosomal subunit protein uS15.